The following is a 182-amino-acid chain: Adenylate kinase (182 aa).

Position 12 to 17 (12 to 17 (GAGKGT)) interacts with ATP. An NMP region spans residues 32–61 (STGDLLREEVSGGTDLGKKAELIMNKGELV). Residues threonine 33, arginine 38, 59–61 (ELV), 85–88 (GFPR), and glutamine 92 contribute to the AMP site. Residues 126–132 (GRGRKDD) are LID. Residue arginine 127 participates in ATP binding. Arginine 129 and arginine 140 together coordinate AMP. Glycine 168 lines the ATP pocket.

This sequence belongs to the adenylate kinase family. In terms of assembly, monomer.

The protein resides in the cytoplasm. It catalyses the reaction AMP + ATP = 2 ADP. The protein operates within purine metabolism; AMP biosynthesis via salvage pathway; AMP from ADP: step 1/1. Its function is as follows. Catalyzes the reversible transfer of the terminal phosphate group between ATP and AMP. Plays an important role in cellular energy homeostasis and in adenine nucleotide metabolism. The polypeptide is Adenylate kinase (Prochlorococcus marinus (strain SARG / CCMP1375 / SS120)).